The following is a 610-amino-acid chain: UvrABC system protein C (610 aa).

The GIY-YIG domain maps to 13-91 (HLPGVYRMYD…IKENQPKYNV (79 aa)). The UVR domain occupies 201 to 236 (GQVIEHLVQKMENAAQELDFEAAARFRDQIQSVRAV).

Belongs to the UvrC family. Interacts with UvrB in an incision complex.

It is found in the cytoplasm. Its function is as follows. The UvrABC repair system catalyzes the recognition and processing of DNA lesions. UvrC both incises the 5' and 3' sides of the lesion. The N-terminal half is responsible for the 3' incision and the C-terminal half is responsible for the 5' incision. The sequence is that of UvrABC system protein C from Actinobacillus pleuropneumoniae serotype 3 (strain JL03).